The following is a 289-amino-acid chain: MEIKDLQIFQKVVEYGSVSKAAKSLNYVQSYVTVRIQKLEEELQTELFHRSSRGMVLNSEGKTLLFYSQNIISMVDEMIKVVQDCDNPAGSLEIGTVETVNKLPSILSAYHKKYPKIDLSLITGVTEDLVDDVLNYKLDGAFVTGYYNHPQIIQYEVFEEELVLISNYDKLPFEELKNKPLLVFKQGCSYRAKLEGWVRDEGEINAKIMEFGTMETILGSVIAGLGITIIPKSTISLLEAEGVVRIYEIPEKYSKITTVFIHRADTFLTNALQKFIETIKNAPETARKL.

Residues 1–58 form the HTH lysR-type domain; that stretch reads MEIKDLQIFQKVVEYGSVSKAAKSLNYVQSYVTVRIQKLEEELQTELFHRSSRGMVLN. The segment at residues 18–37 is a DNA-binding region (H-T-H motif); sequence VSKAAKSLNYVQSYVTVRIQ.

Belongs to the LysR transcriptional regulatory family.

Functionally, transcriptional repressor of soxA gene expression. The protein is HTH-type transcriptional regulator SoxR (soxR) of Arthrobacter sp. (strain TE1826).